We begin with the raw amino-acid sequence, 465 residues long: Muscarinic acetylcholine receptor M2 (465 aa).

Topologically, residues 1 to 21 (MNNSTNSSNNVALTSPYKTFE) are extracellular. N-linked (GlcNAc...) asparagine glycosylation is found at asparagine 2, asparagine 3, and asparagine 6. A helical membrane pass occupies residues 22 to 44 (VVFIVLVAGSLSLVTIIGNILVM). Residues 45-58 (VSIKVNRHLQTVNN) are Cytoplasmic-facing. The chain crosses the membrane as a helical span at residues 59–79 (YFLFSLACADLIIGVFSMNLY). At 80 to 96 (TLYTVIGYWPLGPVVCD) the chain is on the extracellular side. Cysteine 95 and cysteine 175 are disulfide-bonded. Residues 97 to 118 (LWLALDYVVSNASVMNLLIISF) traverse the membrane as a helical segment. Positions 119 to 121 (DRY) match the Important for signaling motif. Topologically, residues 119–138 (DRYFCVTKPLTYPVKRTTKM) are cytoplasmic. Residues 139 to 161 (AGMMIAAAWVLSFILWAPAILFW) form a helical membrane-spanning segment. Over 162-183 (QFIVGVRTVEDGECYIQFFSNA) the chain is Extracellular. Residues 184–208 (AVTFGTAIAAFYLPVIIMTVLYWHI) form a helical membrane-spanning segment. The Cytoplasmic segment spans residues 209–386 (SRASKSRIKK…PPSREKKVTR (178 aa)). Residues 217–319 (KKDKKEPVAN…SVGHSKDENS (103 aa)) are disordered. A Phosphoserine modification is found at serine 231. Residues 253-269 (GLEHNKIQNGKTPRDAV) show a composition bias toward basic and acidic residues. Composition is skewed to polar residues over residues 283–292 (NDSTSVSAVA) and 303–312 (DENTVSTSVG). A helical transmembrane segment spans residues 387-409 (TILAILLAFIITWAPYNVMVLIN). The Extracellular segment spans residues 410–417 (TFCAPCIP). Residues cysteine 412 and cysteine 415 are joined by a disulfide bond. The helical transmembrane segment at 418–441 (NTVWTIGYWLCYINSTINPACYAL) threads the bilayer. Residues 435–439 (NPACY) carry the Important for signaling motif. Residues 442 to 465 (CNATFKKTFKHLLMCHYKNIGATR) are Cytoplasmic-facing. 3 positions are modified to phosphothreonine: threonine 445, threonine 449, and threonine 464.

This sequence belongs to the G-protein coupled receptor 1 family. Muscarinic acetylcholine receptor subfamily. CHRM2 sub-subfamily. Interacts with ARRB1 and ARRB2. Interacts with RACK1; the interaction regulates CHRM2 internalization. Phosphorylated in response to agonist treatment.

It localises to the cell membrane. The protein localises to the postsynaptic cell membrane. The muscarinic acetylcholine receptor mediates various cellular responses, including inhibition of adenylate cyclase, breakdown of phosphoinositides and modulation of potassium channels through the action of G proteins. Primary transducing effect is adenylate cyclase inhibition. Signaling promotes phospholipase C activity, leading to the release of inositol trisphosphate (IP3); this then triggers calcium ion release into the cytosol. This Bos taurus (Bovine) protein is Muscarinic acetylcholine receptor M2 (CHRM2).